A 77-amino-acid polypeptide reads, in one-letter code: Acyl carrier protein (77 aa).

One can recognise a Carrier domain in the interval 1 to 76; that stretch reads MENFDKVKDI…DAVNFINNLE (76 aa). At Ser36 the chain carries O-(pantetheine 4'-phosphoryl)serine.

The protein belongs to the acyl carrier protein (ACP) family. 4'-phosphopantetheine is transferred from CoA to a specific serine of apo-ACP by AcpS. This modification is essential for activity because fatty acids are bound in thioester linkage to the sulfhydryl of the prosthetic group.

The protein resides in the cytoplasm. Its pathway is lipid metabolism; fatty acid biosynthesis. In terms of biological role, carrier of the growing fatty acid chain in fatty acid biosynthesis. The protein is Acyl carrier protein of Staphylococcus carnosus (strain TM300).